The sequence spans 96 residues: Secreted RxLR effector protein 123 (96 aa).

The signal sequence occupies residues 1–22 (MVGAYYVGIALLVAGGSQTAAG). Positions 49–70 (RFLRKSRNPKDNLMLSEANEER) match the RxLR-dEER motif. The tract at residues 57 to 96 (PKDNLMLSEANEERTPSSPSNSLTEFIVSEPITTNVMRTE) is disordered. Residues 87-96 (PITTNVMRTE) are compositionally biased toward polar residues.

Belongs to the RxLR effector family.

It localises to the secreted. The protein localises to the host nucleus. The protein resides in the host cytoplasm. Functionally, secreted effector that dos not suppress the host cell death induced by cell death-inducing proteins. This chain is Secreted RxLR effector protein 123, found in Plasmopara viticola (Downy mildew of grapevine).